A 647-amino-acid chain; its full sequence is 1-phosphatidylinositol 4,5-bisphosphate phosphodiesterase zeta-1 (647 aa).

One can recognise an EF-hand domain in the interval 43 to 78 (CHFAHVKHIFKENDRQNQGRITIEEFRAIYRCIVHR). In terms of domain architecture, PI-PLC X-box spans 163–307 (QDMNHPLSDY…LKFKILVKNR (145 aa)). Catalysis depends on residues His-178 and His-223. Residues 386-502 (LSDLVIYTKA…GYILKPDILR (117 aa)) form the PI-PLC Y-box domain. The region spanning 502–627 (RDTTLGFNPN…KGYRRVPLFS (126 aa)) is the C2 domain.

As to quaternary structure, interacts via its C2 domain with PtdIns(3)P and, to a lesser extent, PtdIns(5)P in vitro. It depends on Ca(2+) as a cofactor. Highly expressed in postpuberal testis, where expression is sperm cell-specific. Also expressed in brain of both sexes.

Its subcellular location is the nucleus. The protein resides in the cytoplasm. The protein localises to the perinuclear region. The catalysed reaction is a 1,2-diacyl-sn-glycero-3-phospho-(1D-myo-inositol-4,5-bisphosphate) + H2O = 1D-myo-inositol 1,4,5-trisphosphate + a 1,2-diacyl-sn-glycerol + H(+). The production of the second messenger molecules diacylglycerol (DAG) and inositol 1,4,5-trisphosphate (IP3) is mediated by activated phosphatidylinositol-specific phospholipase C enzymes. In vitro, hydrolyzes PtdIns(4,5)P2 in a Ca(2+)-dependent manner. Triggers intracellular Ca(2+) oscillations in oocytes solely during M phase and is involved in inducing oocyte activation and initiating embryonic development up to the blastocyst stage. Is therefore a strong candidate for the egg-activating soluble sperm factor that is transferred from the sperm into the egg cytoplasm following gamete membrane fusion. May exert an inhibitory effect on phospholipase-C-coupled processes that depend on calcium ions and protein kinase C, including CFTR trafficking and function. The polypeptide is 1-phosphatidylinositol 4,5-bisphosphate phosphodiesterase zeta-1 (Mus musculus (Mouse)).